The primary structure comprises 24 residues: Hyaluronidase (24 aa).

In terms of tissue distribution, expressed by the venom gland.

The protein localises to the secreted. It carries out the reaction Random hydrolysis of (1-&gt;4)-linkages between N-acetyl-beta-D-glucosamine and D-glucuronate residues in hyaluronate.. In terms of biological role, possesses high activity against hyaluronan in vitro. In Tityus stigmurus (Brazilian scorpion), this protein is Hyaluronidase.